The sequence spans 477 residues: Inner membrane transporter YgjI (477 aa).

Topologically, residues 1–8 are periplasmic; the sequence is MSDTKRNT. The chain crosses the membrane as a helical span at residues 9-29; sequence IGKFGLLSLTFAAVYSFNNVI. Topologically, residues 30–41 are cytoplasmic; sequence NNNIELGLASAP. Residues 42-62 traverse the membrane as a helical segment; that stretch reads MFFLATIFYFIPFCLIIAEFV. At 63–83 the chain is on the periplasmic side; that stretch reads SLNKNSEAGVYAWVKSSLGGR. Residues 84–104 traverse the membrane as a helical segment; it reads WAFITAYTYWFVNLFFFTSLL. Residues 105 to 120 lie on the Cytoplasmic side of the membrane; sequence PRVIAYASYAFLGYEY. A helical membrane pass occupies residues 121–141; that stretch reads IMTPVATTIISMVLFAFSTWV. At 142 to 158 the chain is on the periplasmic side; it reads STNGAKMLGPITSVTST. Residues 159–179 form a helical membrane-spanning segment; the sequence is LMLLLTLSYILLAGTALVGGV. At 180–196 the chain is on the cytoplasmic side; the sequence is QPADAITVDAMIPNFNW. The helical transmembrane segment at 197-217 threads the bilayer; that stretch reads AFLGVTTWIFMAAGGAESVAV. Over 218 to 232 the chain is Periplasmic; the sequence is YVNDVKGGSKSFVKV. A helical transmembrane segment spans residues 233-253; it reads IILAGIFIGVLYSVSSVLINV. At 254 to 263 the chain is on the cytoplasmic side; it reads FVSSKELKFT. The helical transmembrane segment at 264 to 284 threads the bilayer; sequence GGSVQVFHGMAAYFGLPEALM. The Periplasmic portion of the chain corresponds to 285 to 286; the sequence is NR. A helical membrane pass occupies residues 287–307; that stretch reads FVGLVSFTAMFGSLLMWTATP. At 308–335 the chain is on the cytoplasmic side; that stretch reads VKIFFSEIPEGIFGKKTVELNENGVPAR. Residues 336–356 form a helical membrane-spanning segment; that stretch reads AAWIQFLIVIPLMIIPMLGSN. Topologically, residues 357–364 are periplasmic; that stretch reads TVQDLMNT. The chain crosses the membrane as a helical span at residues 365–385; that stretch reads IINMTAAASMLPPLFIMLAYL. The Cytoplasmic portion of the chain corresponds to 386 to 405; that stretch reads NLRAKLDHLPRDFRMGSRRT. Residues 406-426 traverse the membrane as a helical segment; the sequence is GIIVVSMLIAIFAVGFVASTF. Residues 427 to 431 lie on the Periplasmic side of the membrane; sequence PTGAN. Residues 432–452 traverse the membrane as a helical segment; it reads ILTIIFYNVGGIVIFLGFAWW. Over 453–477 the chain is Cytoplasmic; that stretch reads KYSKYIKGLTAEERHIEATPASNVD.

It belongs to the amino acid-polyamine-organocation (APC) superfamily.

Its subcellular location is the cell inner membrane. The polypeptide is Inner membrane transporter YgjI (ygjI) (Escherichia coli (strain K12)).